Consider the following 556-residue polypeptide: Testis-specific protein 10-interacting protein (556 aa).

Positions 1–20 are enriched in polar residues; it reads MGQETNMLNAHQQLVRTSSG. Disordered stretches follow at residues 1-102 and 180-320; these read MGQE…SPRK and CTSI…GPWD. Basic residues predominate over residues 75–85; sequence KDRRLRGRNKK. 2 stretches are compositionally biased toward acidic residues: residues 213 to 225 and 246 to 260; these read EPEE…LGAE and LEEE…EAED. Basic residues predominate over residues 266 to 278; the sequence is PWRRRTSSRRKGR. Residues 304–320 are compositionally biased toward basic and acidic residues; that stretch reads EPQRRKPRAKELEGPWD. Residues 387-463 are a coiled coil; the sequence is LRAWELQQRE…ELQGIQHRVQ (77 aa). The tract at residues 503–556 is disordered; that stretch reads AGKRDMEGAPRRHRSHRSVGARMEPSSQSPPKMEPTGSQADQHFAPNPDQELSP. The segment covering 527 to 543 has biased composition (polar residues); it reads PSSQSPPKMEPTGSQAD.

The protein is Testis-specific protein 10-interacting protein (TSGA10IP) of Bos taurus (Bovine).